A 169-amino-acid chain; its full sequence is uncharacterized protein (169 aa).

This is an uncharacterized protein from Mycoplasma pneumoniae (strain ATCC 29342 / M129 / Subtype 1) (Mycoplasmoides pneumoniae).